The sequence spans 413 residues: Arginine biosynthesis bifunctional protein ArgJ (413 aa).

Substrate-binding residues include threonine 158, lysine 184, threonine 195, glutamate 285, asparagine 408, and serine 413. Threonine 195 acts as the Nucleophile in catalysis.

Belongs to the ArgJ family. In terms of assembly, heterotetramer of two alpha and two beta chains.

Its subcellular location is the cytoplasm. It catalyses the reaction N(2)-acetyl-L-ornithine + L-glutamate = N-acetyl-L-glutamate + L-ornithine. The enzyme catalyses L-glutamate + acetyl-CoA = N-acetyl-L-glutamate + CoA + H(+). It participates in amino-acid biosynthesis; L-arginine biosynthesis; L-ornithine and N-acetyl-L-glutamate from L-glutamate and N(2)-acetyl-L-ornithine (cyclic): step 1/1. Its pathway is amino-acid biosynthesis; L-arginine biosynthesis; N(2)-acetyl-L-ornithine from L-glutamate: step 1/4. Catalyzes two activities which are involved in the cyclic version of arginine biosynthesis: the synthesis of N-acetylglutamate from glutamate and acetyl-CoA as the acetyl donor, and of ornithine by transacetylation between N(2)-acetylornithine and glutamate. The chain is Arginine biosynthesis bifunctional protein ArgJ from Brucella melitensis biotype 1 (strain ATCC 23456 / CCUG 17765 / NCTC 10094 / 16M).